We begin with the raw amino-acid sequence, 159 residues long: Ribosome maturation factor RimM (159 aa).

The PRC barrel domain maps to 86–159; the sequence is SDAFHLPKLI…IHIETIEGLI (74 aa).

The protein belongs to the RimM family. Binds ribosomal protein uS19.

It localises to the cytoplasm. Functionally, an accessory protein needed during the final step in the assembly of 30S ribosomal subunit, possibly for assembly of the head region. Essential for efficient processing of 16S rRNA. May be needed both before and after RbfA during the maturation of 16S rRNA. It has affinity for free ribosomal 30S subunits but not for 70S ribosomes. The sequence is that of Ribosome maturation factor RimM from Acholeplasma laidlawii (strain PG-8A).